A 290-amino-acid chain; its full sequence is D-tagatose 3-epimerase (290 aa).

Cysteine 66 serves as a coordination point for substrate. Catalysis depends on glutamate 152, which acts as the Proton donor/acceptor. Glutamate 152 lines the Mn(2+) pocket. Substrate-binding positions include glutamate 158 and 185–188 (DTFH). The Mn(2+) site is built by aspartate 185 and histidine 211. A substrate-binding site is contributed by arginine 217. The active-site Proton donor/acceptor is glutamate 246. Residue glutamate 246 coordinates Mn(2+).

Belongs to the hyi family. As to quaternary structure, homodimer. The cofactor is Mn(2+).

The catalysed reaction is keto-D-tagatose = keto-D-sorbose. It carries out the reaction D-allulose = keto-D-fructose. It catalyses the reaction D-ribulose = D-xylulose. Its activity is regulated as follows. Strongly inhibited (about 90% of the enzyme activity) by Ag(+), Hg(2+) and p-chloromercuribenzoic acid. Cu(2+) and Zn(2+) inhibit about 60% of the enzyme activity. Catalyzes the epimerization of various ketoses at the C(3) position. It is able to interconvert D-tagatose and D-ribulose to D-sorbose and D-xylulose, respectively. The enzyme is also able to accept other ketopentoses such as D-psicose with lower efficiency. The polypeptide is D-tagatose 3-epimerase (Pseudomonas cichorii).